The chain runs to 214 residues: Phosphatidylserine decarboxylase proenzyme (214 aa).

The Schiff-base intermediate with substrate; via pyruvic acid role is filled by serine 182. Serine 182 is modified (pyruvic acid (Ser); by autocatalysis).

Belongs to the phosphatidylserine decarboxylase family. PSD-A subfamily. In terms of assembly, heterodimer of a large membrane-associated beta subunit and a small pyruvoyl-containing alpha subunit. Requires pyruvate as cofactor. In terms of processing, is synthesized initially as an inactive proenzyme. Formation of the active enzyme involves a self-maturation process in which the active site pyruvoyl group is generated from an internal serine residue via an autocatalytic post-translational modification. Two non-identical subunits are generated from the proenzyme in this reaction, and the pyruvate is formed at the N-terminus of the alpha chain, which is derived from the carboxyl end of the proenzyme. The post-translation cleavage follows an unusual pathway, termed non-hydrolytic serinolysis, in which the side chain hydroxyl group of the serine supplies its oxygen atom to form the C-terminus of the beta chain, while the remainder of the serine residue undergoes an oxidative deamination to produce ammonia and the pyruvoyl prosthetic group on the alpha chain.

The protein resides in the cell membrane. The catalysed reaction is a 1,2-diacyl-sn-glycero-3-phospho-L-serine + H(+) = a 1,2-diacyl-sn-glycero-3-phosphoethanolamine + CO2. It functions in the pathway phospholipid metabolism; phosphatidylethanolamine biosynthesis; phosphatidylethanolamine from CDP-diacylglycerol: step 2/2. Its function is as follows. Catalyzes the formation of phosphatidylethanolamine (PtdEtn) from phosphatidylserine (PtdSer). This is Phosphatidylserine decarboxylase proenzyme from Burkholderia lata (strain ATCC 17760 / DSM 23089 / LMG 22485 / NCIMB 9086 / R18194 / 383).